The chain runs to 205 residues: Protein GrpE (205 aa).

Residues 172–205 form a disordered region; the sequence is KGSTGPGAPAEPAAAPNPYASNGADTGGSFDTKA. Positions 177–195 are enriched in low complexity; the sequence is PGAPAEPAAAPNPYASNGA.

It belongs to the GrpE family. As to quaternary structure, homodimer.

Its subcellular location is the cytoplasm. Its function is as follows. Participates actively in the response to hyperosmotic and heat shock by preventing the aggregation of stress-denatured proteins, in association with DnaK and GrpE. It is the nucleotide exchange factor for DnaK and may function as a thermosensor. Unfolded proteins bind initially to DnaJ; upon interaction with the DnaJ-bound protein, DnaK hydrolyzes its bound ATP, resulting in the formation of a stable complex. GrpE releases ADP from DnaK; ATP binding to DnaK triggers the release of the substrate protein, thus completing the reaction cycle. Several rounds of ATP-dependent interactions between DnaJ, DnaK and GrpE are required for fully efficient folding. This Caulobacter sp. (strain K31) protein is Protein GrpE.